A 451-amino-acid polypeptide reads, in one-letter code: Uronate isomerase (451 aa).

The protein belongs to the metallo-dependent hydrolases superfamily. Uronate isomerase family.

It catalyses the reaction D-glucuronate = D-fructuronate. The enzyme catalyses aldehydo-D-galacturonate = keto-D-tagaturonate. Its pathway is carbohydrate metabolism; pentose and glucuronate interconversion. The chain is Uronate isomerase from Thermotoga petrophila (strain ATCC BAA-488 / DSM 13995 / JCM 10881 / RKU-1).